The primary structure comprises 402 residues: Deoxyguanosinetriphosphate triphosphohydrolase-like protein (402 aa).

The HD domain occupies 73–217 (RLTHTIEVAQ…AAIADDIAYN (145 aa)).

The protein belongs to the dGTPase family. Type 2 subfamily.

The protein is Deoxyguanosinetriphosphate triphosphohydrolase-like protein of Brucella suis (strain ATCC 23445 / NCTC 10510).